A 341-amino-acid chain; its full sequence is Glycerol-3-phosphate dehydrogenase [NAD(P)+] 1 (341 aa).

Residues serine 17, tryptophan 18, arginine 37, and lysine 112 each contribute to the NADPH site. Sn-glycerol 3-phosphate contacts are provided by lysine 112 and glycine 140. Position 144 (alanine 144) interacts with NADPH. Sn-glycerol 3-phosphate is bound by residues lysine 195, aspartate 248, serine 258, arginine 259, and asparagine 260. The active-site Proton acceptor is lysine 195. Residue arginine 259 participates in NADPH binding. The NADPH site is built by valine 283 and glutamate 285.

Belongs to the NAD-dependent glycerol-3-phosphate dehydrogenase family.

The protein localises to the cytoplasm. The catalysed reaction is sn-glycerol 3-phosphate + NAD(+) = dihydroxyacetone phosphate + NADH + H(+). The enzyme catalyses sn-glycerol 3-phosphate + NADP(+) = dihydroxyacetone phosphate + NADPH + H(+). Its pathway is membrane lipid metabolism; glycerophospholipid metabolism. Its function is as follows. Catalyzes the reduction of the glycolytic intermediate dihydroxyacetone phosphate (DHAP) to sn-glycerol 3-phosphate (G3P), the key precursor for phospholipid synthesis. The polypeptide is Glycerol-3-phosphate dehydrogenase [NAD(P)+] 1 (Mycobacterium bovis (strain ATCC BAA-935 / AF2122/97)).